Reading from the N-terminus, the 98-residue chain is NADH-ubiquinone oxidoreductase chain 4L (98 aa).

The next 3 helical transmembrane spans lie at 1 to 21 (MSLVHINILMAFIMSLTGLLM), 29 to 49 (ALLCLEGMMLSLFVLATLTIL), and 61 to 81 (IILLVFAACEAAIGLALLVMI).

Belongs to the complex I subunit 4L family. In terms of assembly, core subunit of respiratory chain NADH dehydrogenase (Complex I) which is composed of 45 different subunits.

Its subcellular location is the mitochondrion inner membrane. The catalysed reaction is a ubiquinone + NADH + 5 H(+)(in) = a ubiquinol + NAD(+) + 4 H(+)(out). Core subunit of the mitochondrial membrane respiratory chain NADH dehydrogenase (Complex I) which catalyzes electron transfer from NADH through the respiratory chain, using ubiquinone as an electron acceptor. Part of the enzyme membrane arm which is embedded in the lipid bilayer and involved in proton translocation. The chain is NADH-ubiquinone oxidoreductase chain 4L (MT-ND4L) from Delphinapterus leucas (Beluga whale).